An 87-amino-acid polypeptide reads, in one-letter code: DNA-directed RNA polymerase subunit Rpo5 (87 aa).

It belongs to the archaeal Rpo5/eukaryotic RPB5 RNA polymerase subunit family. In terms of assembly, part of the RNA polymerase complex.

It is found in the cytoplasm. The enzyme catalyses RNA(n) + a ribonucleoside 5'-triphosphate = RNA(n+1) + diphosphate. In terms of biological role, DNA-dependent RNA polymerase (RNAP) catalyzes the transcription of DNA into RNA using the four ribonucleoside triphosphates as substrates. This is DNA-directed RNA polymerase subunit Rpo5 from Thermoplasma acidophilum (strain ATCC 25905 / DSM 1728 / JCM 9062 / NBRC 15155 / AMRC-C165).